A 337-amino-acid polypeptide reads, in one-letter code: Tetraacyldisaccharide 4'-kinase (337 aa).

His51 to Thr58 lines the ATP pocket.

The protein belongs to the LpxK family.

It carries out the reaction a lipid A disaccharide + ATP = a lipid IVA + ADP + H(+). Its pathway is glycolipid biosynthesis; lipid IV(A) biosynthesis; lipid IV(A) from (3R)-3-hydroxytetradecanoyl-[acyl-carrier-protein] and UDP-N-acetyl-alpha-D-glucosamine: step 6/6. Transfers the gamma-phosphate of ATP to the 4'-position of a tetraacyldisaccharide 1-phosphate intermediate (termed DS-1-P) to form tetraacyldisaccharide 1,4'-bis-phosphate (lipid IVA). In Afipia carboxidovorans (strain ATCC 49405 / DSM 1227 / KCTC 32145 / OM5) (Oligotropha carboxidovorans), this protein is Tetraacyldisaccharide 4'-kinase.